A 395-amino-acid polypeptide reads, in one-letter code: Calsequestrin-1 (395 aa).

The N-terminal stretch at 1-28 (MNAADRMGARVALLLLLVLGSPQSGVHG) is a signal peptide. Tyr37 bears the Phosphotyrosine mark. At Ser75 the chain carries Phosphoserine. Thr118 is subject to Phosphothreonine. At Ser210 the chain carries Phosphoserine. N-linked (GlcNAc...) asparagine glycosylation occurs at Asn344. The segment at 376–395 (EGEINTEDDDDEDDDDDDDD) is disordered.

Belongs to the calsequestrin family. Monomer; increases in response to a depletion of intracellular calcium. Homodimer. Homotetramer and homopolymer. Can form linear homooligomers. Ca(2+) ions promote oligomerization. Interacts (via C-terminal end and preferentially with the monomeric form) with STIM1; this interaction increases in response to a depletion of intracellular calcium, decreases both STIM1 aggregation and clustering, interaction of STIM1 with ORAI1 and store-operated Ca(2+) entry (SOCE) activity. Interacts with ASPH and TRDN. In terms of processing, N-glycosylated. As to expression, detected in skeletal muscle (at protein level). Detected in skeletal muscle.

It is found in the endoplasmic reticulum. The protein resides in the sarcoplasmic reticulum. It localises to the sarcoplasmic reticulum lumen. Its subcellular location is the mitochondrion matrix. The protein localises to the sarcoplasmic reticulum membrane. Functionally, calsequestrin is a high-capacity, moderate affinity, calcium-binding protein and thus acts as an internal calcium store in muscle. Calcium ions are bound by clusters of acidic residues at the protein surface, often at the interface between subunits. Can bind around 80 Ca(2+) ions. Regulates the release of lumenal Ca(2+) via the calcium release channel RYR1; this plays an important role in triggering muscle contraction. Negatively regulates store-operated Ca(2+) entry (SOCE) activity. The sequence is that of Calsequestrin-1 (CASQ1) from Oryctolagus cuniculus (Rabbit).